A 76-amino-acid polypeptide reads, in one-letter code: Sea anemone sodium channel inhibitor type I (76 aa).

The first 19 residues, 1–19, serve as a signal peptide directing secretion; that stretch reads MNRMLIIFVVVTVFGLASG. A propeptide spanning residues 20–30 is cleaved from the precursor; that stretch reads LGPNMPAPDLA. 3 disulfide bridges follow: Cys37–Cys72, Cys39–Cys60, and Cys53–Cys73.

The protein belongs to the sea anemone sodium channel inhibitory toxin family. Type I subfamily. As to expression, expressed in acontia, a specialised envenomation structure laden with batteries of venom-containing nematocysts found only in the superfamily Metridioidea.

The protein localises to the secreted. The protein resides in the nematocyst. In terms of biological role, may affect sodium channels (Nav). The polypeptide is Sea anemone sodium channel inhibitor type I (Calliactis polypus (Hermit crab anemone)).